The chain runs to 100 residues: uncharacterized protein (100 aa).

Over residues 65–91 the composition is skewed to basic and acidic residues; sequence DDRERHLSATGERRREQGFGTSRRKDP. A disordered region spans residues 65-100; it reads DDRERHLSATGERRREQGFGTSRRKDPSLYNWSDVK.

Belongs to the chlamydial CPn_0121/CT_031/TC_0300 family.

This is an uncharacterized protein from Chlamydia trachomatis serovar D (strain ATCC VR-885 / DSM 19411 / UW-3/Cx).